Reading from the N-terminus, the 298-residue chain is tRNA-cytidine(32) 2-sulfurtransferase (298 aa).

The PP-loop motif signature appears at 48–53 (SGGKDS). 3 residues coordinate [4Fe-4S] cluster: Cys-123, Cys-126, and Cys-214.

It belongs to the TtcA family. Homodimer. Mg(2+) serves as cofactor. The cofactor is [4Fe-4S] cluster.

It localises to the cytoplasm. It catalyses the reaction cytidine(32) in tRNA + S-sulfanyl-L-cysteinyl-[cysteine desulfurase] + AH2 + ATP = 2-thiocytidine(32) in tRNA + L-cysteinyl-[cysteine desulfurase] + A + AMP + diphosphate + H(+). It functions in the pathway tRNA modification. Its function is as follows. Catalyzes the ATP-dependent 2-thiolation of cytidine in position 32 of tRNA, to form 2-thiocytidine (s(2)C32). The sulfur atoms are provided by the cysteine/cysteine desulfurase (IscS) system. This chain is tRNA-cytidine(32) 2-sulfurtransferase, found in Nitrosospira multiformis (strain ATCC 25196 / NCIMB 11849 / C 71).